The primary structure comprises 349 residues: Glycosyltransferase 8 domain-containing protein 2 (349 aa).

Residues 1-6 (MALLRK) lie on the Cytoplasmic side of the membrane. A helical; Signal-anchor for type II membrane protein membrane pass occupies residues 7–24 (INQVLLFLLIVTLCVILY). The Lumenal segment spans residues 25-349 (KKVHKGTVSK…AGIFKLNHHS (325 aa)). Asn234 carries an N-linked (GlcNAc...) asparagine glycan.

It belongs to the glycosyltransferase 8 family.

Its subcellular location is the membrane. The chain is Glycosyltransferase 8 domain-containing protein 2 (GLT8D2) from Macaca fascicularis (Crab-eating macaque).